The following is a 443-amino-acid chain: Ribosomal protein uS12 methylthiotransferase RimO (443 aa).

One can recognise an MTTase N-terminal domain in the interval 8 to 118 (PKVGFVSLGC…VVNAVHEVVP (111 aa)). 6 residues coordinate [4Fe-4S] cluster: cysteine 17, cysteine 53, cysteine 82, cysteine 151, cysteine 155, and cysteine 158. The Radical SAM core domain occupies 137–376 (LTPRHYAYLK…AHQQAISSAR (240 aa)). Positions 378-443 (QLRIGKEIEV…DEYDMWAEPV (66 aa)) constitute a TRAM domain.

It belongs to the methylthiotransferase family. RimO subfamily. The cofactor is [4Fe-4S] cluster.

Its subcellular location is the cytoplasm. The catalysed reaction is L-aspartate(89)-[ribosomal protein uS12]-hydrogen + (sulfur carrier)-SH + AH2 + 2 S-adenosyl-L-methionine = 3-methylsulfanyl-L-aspartate(89)-[ribosomal protein uS12]-hydrogen + (sulfur carrier)-H + 5'-deoxyadenosine + L-methionine + A + S-adenosyl-L-homocysteine + 2 H(+). Catalyzes the methylthiolation of an aspartic acid residue of ribosomal protein uS12. The protein is Ribosomal protein uS12 methylthiotransferase RimO of Pseudomonas putida (strain W619).